The following is a 434-amino-acid chain: MTTQVVNVIGAGLAGSEAAYQIAKRGVQVRLYEMRPVRQTPAHHTDKFAELVCSNSLRANTLTNAVGVIKEEMRLMDSVIIRAADECSVPAGGALAVDRHEFAAKVTEYVKNHPNVTVMNEEITEIPEGPTIIATGPLTSPDLSAQLKELTGEDYFYFYDAAAPIVEKDSIDMNKVYLKSRYDKGEAAYLNCPMTEEEFDRFYEALIAAETVPLKEFEKEIFFEGCMPVEVMASRGRQTLVFGPMKPVGLEDPKTGKTPYAVVQLRQDDAAGTLYNIVGFQTHLKWGPQKEVLQLIPGLENAEIVRYGVMHRNTFINSPNLLRPTYQYKQRDDLFFAGQMTGVEGYVESAASGLLAGINAARLVKGEEPVVLPPVTAMGSMANYITATNAKNFQPMNANFGLFAPLEKKIKKKAERNEAYATRALETIRNFVNI.

FAD is bound at residue 10–15 (GAGLAG).

This sequence belongs to the MnmG family. TrmFO subfamily. Requires FAD as cofactor.

The protein localises to the cytoplasm. The catalysed reaction is uridine(54) in tRNA + (6R)-5,10-methylene-5,6,7,8-tetrahydrofolate + NADH + H(+) = 5-methyluridine(54) in tRNA + (6S)-5,6,7,8-tetrahydrofolate + NAD(+). It catalyses the reaction uridine(54) in tRNA + (6R)-5,10-methylene-5,6,7,8-tetrahydrofolate + NADPH + H(+) = 5-methyluridine(54) in tRNA + (6S)-5,6,7,8-tetrahydrofolate + NADP(+). In terms of biological role, catalyzes the folate-dependent formation of 5-methyl-uridine at position 54 (M-5-U54) in all tRNAs. In Bacillus cereus (strain AH820), this protein is Methylenetetrahydrofolate--tRNA-(uracil-5-)-methyltransferase TrmFO.